The sequence spans 541 residues: Apolipoprotein N-acyltransferase (541 aa).

6 helical membrane passes run 21-41 (MSWFFSLLGSAVGYGLLWYSL), 54-74 (LTSLLFLWSVTVYGVHFSWML), 89-109 (VLISLLALLFTAFSCLLFFIV), 116-136 (ILWCLPGLWVAVEMVRFYFLC), 157-177 (FGGFFGWAGESFILVATGISF), and 189-209 (YVWLGCLLFPYILGGVHYEYL). In terms of domain architecture, CN hydrolase spans 219 to 500 (LRVAVIQPAS…PGVLQVSLPM (282 aa)). Glu265 acts as the Proton acceptor in catalysis. Lys350 is a catalytic residue. Cys405 serves as the catalytic Nucleophile. The chain crosses the membrane as a helical span at residues 506-526 (LYAFWGDFPMIFLSLLSIGCI).

Belongs to the CN hydrolase family. Apolipoprotein N-acyltransferase subfamily.

The protein resides in the cell inner membrane. It carries out the reaction N-terminal S-1,2-diacyl-sn-glyceryl-L-cysteinyl-[lipoprotein] + a glycerophospholipid = N-acyl-S-1,2-diacyl-sn-glyceryl-L-cysteinyl-[lipoprotein] + a 2-acyl-sn-glycero-3-phospholipid + H(+). It participates in protein modification; lipoprotein biosynthesis (N-acyl transfer). Its function is as follows. Catalyzes the phospholipid dependent N-acylation of the N-terminal cysteine of apolipoprotein, the last step in lipoprotein maturation. In Chlamydia caviae (strain ATCC VR-813 / DSM 19441 / 03DC25 / GPIC) (Chlamydophila caviae), this protein is Apolipoprotein N-acyltransferase.